Here is a 128-residue protein sequence, read N- to C-terminus: NADPH-dependent 7-cyano-7-deazaguanine reductase (128 aa).

Cysteine 34 serves as the catalytic Thioimide intermediate. The Proton donor role is filled by aspartate 41. Residues 56–58 (IEL) and 75–76 (HE) contribute to the substrate site.

It belongs to the GTP cyclohydrolase I family. QueF type 1 subfamily.

The protein resides in the cytoplasm. It catalyses the reaction 7-aminomethyl-7-carbaguanine + 2 NADP(+) = 7-cyano-7-deazaguanine + 2 NADPH + 3 H(+). The protein operates within tRNA modification; tRNA-queuosine biosynthesis. Catalyzes the NADPH-dependent reduction of 7-cyano-7-deazaguanine (preQ0) to 7-aminomethyl-7-deazaguanine (preQ1). This is NADPH-dependent 7-cyano-7-deazaguanine reductase from Ruthia magnifica subsp. Calyptogena magnifica.